We begin with the raw amino-acid sequence, 104 residues long: UPF0145 protein DET1617 (104 aa).

Belongs to the UPF0145 family.

In Dehalococcoides mccartyi (strain ATCC BAA-2266 / KCTC 15142 / 195) (Dehalococcoides ethenogenes (strain 195)), this protein is UPF0145 protein DET1617.